The chain runs to 309 residues: Ribonuclease Z (309 aa).

Zn(2+)-binding residues include His63, His65, Asp67, His68, His143, Asp213, and His271. Asp67 acts as the Proton acceptor in catalysis.

This sequence belongs to the RNase Z family. As to quaternary structure, homodimer. Zn(2+) is required as a cofactor.

It catalyses the reaction Endonucleolytic cleavage of RNA, removing extra 3' nucleotides from tRNA precursor, generating 3' termini of tRNAs. A 3'-hydroxy group is left at the tRNA terminus and a 5'-phosphoryl group is left at the trailer molecule.. Its function is as follows. Zinc phosphodiesterase, which displays some tRNA 3'-processing endonuclease activity. Probably involved in tRNA maturation, by removing a 3'-trailer from precursor tRNA. This Phocaeicola vulgatus (strain ATCC 8482 / DSM 1447 / JCM 5826 / CCUG 4940 / NBRC 14291 / NCTC 11154) (Bacteroides vulgatus) protein is Ribonuclease Z.